The primary structure comprises 203 residues: Ribosomal RNA small subunit methyltransferase G (203 aa).

S-adenosyl-L-methionine-binding positions include glycine 73, leucine 78, 124-125 (VE), and arginine 139.

The protein belongs to the methyltransferase superfamily. RNA methyltransferase RsmG family.

Its subcellular location is the cytoplasm. The catalysed reaction is guanosine(527) in 16S rRNA + S-adenosyl-L-methionine = N(7)-methylguanosine(527) in 16S rRNA + S-adenosyl-L-homocysteine. Functionally, specifically methylates the N7 position of guanine in position 527 of 16S rRNA. The polypeptide is Ribosomal RNA small subunit methyltransferase G (Haemophilus influenzae (strain 86-028NP)).